We begin with the raw amino-acid sequence, 91 residues long: Small ribosomal subunit protein uS19 (91 aa).

This sequence belongs to the universal ribosomal protein uS19 family.

Its function is as follows. Protein S19 forms a complex with S13 that binds strongly to the 16S ribosomal RNA. The sequence is that of Small ribosomal subunit protein uS19 from Prochlorococcus marinus (strain NATL1A).